Here is a 184-residue protein sequence, read N- to C-terminus: Protein GrpE (184 aa).

A compositionally biased stretch (basic and acidic residues) spans 1-12; that stretch reads MADEQLNEKDLN. A disordered region spans residues 1-22; the sequence is MADEQLNEKDLNAEEAGAVDNG.

It belongs to the GrpE family. Homodimer.

The protein resides in the cytoplasm. Its function is as follows. Participates actively in the response to hyperosmotic and heat shock by preventing the aggregation of stress-denatured proteins, in association with DnaK and GrpE. It is the nucleotide exchange factor for DnaK and may function as a thermosensor. Unfolded proteins bind initially to DnaJ; upon interaction with the DnaJ-bound protein, DnaK hydrolyzes its bound ATP, resulting in the formation of a stable complex. GrpE releases ADP from DnaK; ATP binding to DnaK triggers the release of the substrate protein, thus completing the reaction cycle. Several rounds of ATP-dependent interactions between DnaJ, DnaK and GrpE are required for fully efficient folding. This chain is Protein GrpE, found in Pseudomonas putida (strain W619).